Consider the following 79-residue polypeptide: Sulfur carrier protein TusA (79 aa).

The active-site Cysteine persulfide intermediate is the Cys-17.

The protein belongs to the sulfur carrier protein TusA family.

It is found in the cytoplasm. In terms of biological role, sulfur carrier protein which probably makes part of a sulfur-relay system. This chain is Sulfur carrier protein TusA, found in Idiomarina loihiensis (strain ATCC BAA-735 / DSM 15497 / L2-TR).